The chain runs to 1400 residues: DNA-directed RNA polymerase subunit beta' (1400 aa).

Residues Cys71, Cys73, Cys86, and Cys89 each coordinate Zn(2+). Mg(2+)-binding residues include Asp462, Asp464, and Asp466. Residues Cys811, Cys885, Cys892, and Cys895 each contribute to the Zn(2+) site.

The protein belongs to the RNA polymerase beta' chain family. As to quaternary structure, the RNAP catalytic core consists of 2 alpha, 1 beta, 1 beta' and 1 omega subunit. When a sigma factor is associated with the core the holoenzyme is formed, which can initiate transcription. It depends on Mg(2+) as a cofactor. Zn(2+) is required as a cofactor.

The enzyme catalyses RNA(n) + a ribonucleoside 5'-triphosphate = RNA(n+1) + diphosphate. Its function is as follows. DNA-dependent RNA polymerase catalyzes the transcription of DNA into RNA using the four ribonucleoside triphosphates as substrates. The polypeptide is DNA-directed RNA polymerase subunit beta' (Brucella anthropi (strain ATCC 49188 / DSM 6882 / CCUG 24695 / JCM 21032 / LMG 3331 / NBRC 15819 / NCTC 12168 / Alc 37) (Ochrobactrum anthropi)).